The sequence spans 184 residues: ATP synthase subunit b, chloroplastic (184 aa).

A helical transmembrane segment spans residues 27–49; it reads LATNLINLSVVLGVLIFFGKGVL.

The protein belongs to the ATPase B chain family. In terms of assembly, F-type ATPases have 2 components, F(1) - the catalytic core - and F(0) - the membrane proton channel. F(1) has five subunits: alpha(3), beta(3), gamma(1), delta(1), epsilon(1). F(0) has four main subunits: a(1), b(1), b'(1) and c(10-14). The alpha and beta chains form an alternating ring which encloses part of the gamma chain. F(1) is attached to F(0) by a central stalk formed by the gamma and epsilon chains, while a peripheral stalk is formed by the delta, b and b' chains.

Its subcellular location is the plastid. The protein localises to the chloroplast thylakoid membrane. Functionally, f(1)F(0) ATP synthase produces ATP from ADP in the presence of a proton or sodium gradient. F-type ATPases consist of two structural domains, F(1) containing the extramembraneous catalytic core and F(0) containing the membrane proton channel, linked together by a central stalk and a peripheral stalk. During catalysis, ATP synthesis in the catalytic domain of F(1) is coupled via a rotary mechanism of the central stalk subunits to proton translocation. Component of the F(0) channel, it forms part of the peripheral stalk, linking F(1) to F(0). In Manihot esculenta (Cassava), this protein is ATP synthase subunit b, chloroplastic.